We begin with the raw amino-acid sequence, 328 residues long: Chlorate reductase subunit beta (328 aa).

4Fe-4S ferredoxin-type domains follow at residues 6–35, 125–156, and 158–187; these read VAYVFDLNKCIGCHTCTMACKQLWTNRDGR, NHSFYLPRICNHCSNPACLAACPTKAIYKRPE, and GIVVVDQTRCRGYRYCVKACPYGKMYFNLQ. [4Fe-4S] cluster-binding residues include Cys-15, Cys-18, Cys-21, Cys-25, Cys-134, Cys-137, and Cys-142. Cys-146, Cys-167, and Cys-173 together coordinate [3Fe-4S] cluster. Cys-177, Cys-194, Cys-197, Cys-209, and Cys-213 together coordinate [4Fe-4S] cluster.

In terms of assembly, heterotrimer of alpha, beta and gamma subunits. Requires [3Fe-4S] cluster as cofactor. [4Fe-4S] cluster is required as a cofactor.

Its subcellular location is the periplasm. Electron transfer subunit of the terminal reductase during anaerobic growth on chlorate. The sequence is that of Chlorate reductase subunit beta (clrB) from Ideonella dechloratans.